The chain runs to 494 residues: Chromosomal replication initiator protein DnaA (494 aa).

The interval Met1–Ser103 is domain I, interacts with DnaA modulators. The tract at residues Pro94–Asp117 is disordered. The segment covering Ser101–Ala113 has biased composition (low complexity). Residues Val104 to Val153 are domain II. The domain III, AAA+ region stretch occupies residues Asn154–Ala370. The ATP site is built by Gly198, Gly200, Lys201, and Thr202. A domain IV, binds dsDNA region spans residues Ser371–Arg494.

Belongs to the DnaA family. As to quaternary structure, oligomerizes as a right-handed, spiral filament on DNA at oriC.

Its subcellular location is the cytoplasm. In terms of biological role, plays an essential role in the initiation and regulation of chromosomal replication. ATP-DnaA binds to the origin of replication (oriC) to initiate formation of the DNA replication initiation complex once per cell cycle. Binds the DnaA box (a 9 base pair repeat at the origin) and separates the double-stranded (ds)DNA. Forms a right-handed helical filament on oriC DNA; dsDNA binds to the exterior of the filament while single-stranded (ss)DNA is stabiized in the filament's interior. The ATP-DnaA-oriC complex binds and stabilizes one strand of the AT-rich DNA unwinding element (DUE), permitting loading of DNA polymerase. After initiation quickly degrades to an ADP-DnaA complex that is not apt for DNA replication. Binds acidic phospholipids. This is Chromosomal replication initiator protein DnaA from Mycolicibacterium vanbaalenii (strain DSM 7251 / JCM 13017 / BCRC 16820 / KCTC 9966 / NRRL B-24157 / PYR-1) (Mycobacterium vanbaalenii).